The sequence spans 425 residues: Serine--tRNA ligase (425 aa).

230–232 (TAE) provides a ligand contact to L-serine. 261–263 (RSE) contacts ATP. An L-serine-binding site is contributed by Glu-284. 348-351 (EISS) is a binding site for ATP. Ser-384 contributes to the L-serine binding site.

This sequence belongs to the class-II aminoacyl-tRNA synthetase family. Type-1 seryl-tRNA synthetase subfamily. As to quaternary structure, homodimer. The tRNA molecule binds across the dimer.

It is found in the cytoplasm. The enzyme catalyses tRNA(Ser) + L-serine + ATP = L-seryl-tRNA(Ser) + AMP + diphosphate + H(+). It carries out the reaction tRNA(Sec) + L-serine + ATP = L-seryl-tRNA(Sec) + AMP + diphosphate + H(+). The protein operates within aminoacyl-tRNA biosynthesis; selenocysteinyl-tRNA(Sec) biosynthesis; L-seryl-tRNA(Sec) from L-serine and tRNA(Sec): step 1/1. Functionally, catalyzes the attachment of serine to tRNA(Ser). Is also able to aminoacylate tRNA(Sec) with serine, to form the misacylated tRNA L-seryl-tRNA(Sec), which will be further converted into selenocysteinyl-tRNA(Sec). The chain is Serine--tRNA ligase from Nitratidesulfovibrio vulgaris (strain DSM 19637 / Miyazaki F) (Desulfovibrio vulgaris).